The primary structure comprises 171 residues: 3-hydroxydecanoyl-[acyl-carrier-protein] dehydratase (171 aa).

Histidine 70 is an active-site residue.

It belongs to the thioester dehydratase family. FabA subfamily. As to quaternary structure, homodimer.

The protein resides in the cytoplasm. It catalyses the reaction a (3R)-hydroxyacyl-[ACP] = a (2E)-enoyl-[ACP] + H2O. The catalysed reaction is (3R)-hydroxydecanoyl-[ACP] = (2E)-decenoyl-[ACP] + H2O. The enzyme catalyses (2E)-decenoyl-[ACP] = (3Z)-decenoyl-[ACP]. Its pathway is lipid metabolism; fatty acid biosynthesis. In terms of biological role, necessary for the introduction of cis unsaturation into fatty acids. Catalyzes the dehydration of (3R)-3-hydroxydecanoyl-ACP to E-(2)-decenoyl-ACP and then its isomerization to Z-(3)-decenoyl-ACP. Can catalyze the dehydratase reaction for beta-hydroxyacyl-ACPs with saturated chain lengths up to 16:0, being most active on intermediate chain length. The sequence is that of 3-hydroxydecanoyl-[acyl-carrier-protein] dehydratase from Shewanella frigidimarina (strain NCIMB 400).